We begin with the raw amino-acid sequence, 286 residues long: Translocon-associated protein subunit alpha (286 aa).

The signal sequence occupies residues 1–21 (MRLLPRLLLLFLLAFPAAVLL). Residues 22 to 207 (RGGPGGSLAL…EREDGLDGET (186 aa)) are Lumenal-facing. Residues 46–75 (IIEDEDDEAEVEEDEPTDLAEDKEEEDVSS) show a composition bias toward acidic residues. Residues 46-83 (IIEDEDDEAEVEEDEPTDLAEDKEEEDVSSEPEASPSA) form a disordered region. Asn136 and Asn191 each carry an N-linked (GlcNAc...) asparagine glycan. A helical transmembrane segment spans residues 208 to 228 (IFMYMFLAGLGLLVVVGLHQL). Topologically, residues 229 to 286 (LESRKRKRPIQKVEMGTSSQNDVDMSWIPQETLNQINKASPRRQPRKRAQKRSVGSDE) are cytoplasmic. Positions 236–286 (RPIQKVEMGTSSQNDVDMSWIPQETLNQINKASPRRQPRKRAQKRSVGSDE) are disordered. Over residues 244 to 266 (GTSSQNDVDMSWIPQETLNQINK) the composition is skewed to polar residues. Ser247 carries the phosphoserine modification. The residue at position 260 (Thr260) is a Phosphothreonine. Phosphoserine is present on Ser268. A compositionally biased stretch (basic residues) spans 268 to 279 (SPRRQPRKRAQK).

It belongs to the TRAP-alpha family. Heterotetramer of TRAP-alpha, TRAP-beta, TRAP-delta and TRAP-gamma. Interacts with palmitoylated calnexin (CALX), the interaction is required for efficient folding of glycosylated proteins.

It is found in the endoplasmic reticulum membrane. TRAP proteins are part of a complex whose function is to bind calcium to the ER membrane and thereby regulate the retention of ER resident proteins. May be involved in the recycling of the translocation apparatus after completion of the translocation process or may function as a membrane-bound chaperone facilitating folding of translocated proteins. The sequence is that of Translocon-associated protein subunit alpha (Ssr1) from Mus musculus (Mouse).